Reading from the N-terminus, the 176-residue chain is MNLRQQLGSGLSMAMVLASAFAFWKLFSIVTMSNSPIVVVLSGSMEPAFQRGDVLFLWNREEYVGVGDVVVYKLQEKDIPIVHRVVREHRVMEKDRKTKKKVQKQLLLTKGDNNERDDLPLYAYGQQYLERKKDILGRVFGYVPLVGYVTILITENVYFKYALMALLGLSALVQDE.

Over Met-1 to Ser-9 the chain is Cytoplasmic. The chain crosses the membrane as a helical; Signal-anchor for type II membrane protein span at residues Gly-10–Val-30. At Thr-31 to Glu-176 the chain is on the lumenal side. Residues Ser-44, His-83, and Asp-118 each act as charge relay system in the active site. The interval Ala-162 to Val-173 is C-terminal short (CTS) helix.

Belongs to the peptidase S26B family. As to quaternary structure, component of the signal peptidase complex (SPC) composed of a catalytic subunit SEC11 and three accessory subunits SPC1, SPC2 and SPC3. The complex induces a local thinning of the ER membrane which is used to measure the length of the signal peptide (SP) h-region of protein substrates. This ensures the selectivity of the complex towards h-regions shorter than 18-20 amino acids. SPC associates with the translocon complex.

It is found in the endoplasmic reticulum membrane. It carries out the reaction Cleavage of hydrophobic, N-terminal signal or leader sequences from secreted and periplasmic proteins.. In terms of biological role, catalytic component of the signal peptidase complex (SPC) which catalyzes the cleavage of N-terminal signal sequences from nascent proteins as they are translocated into the lumen of the endoplasmic reticulum. Specifically cleaves N-terminal signal peptides that contain a hydrophobic alpha-helix (h-region) shorter than 18-20 amino acids. This chain is Signal peptidase complex catalytic subunit SEC11 (SEC11), found in Ogataea parapolymorpha (strain ATCC 26012 / BCRC 20466 / JCM 22074 / NRRL Y-7560 / DL-1) (Yeast).